We begin with the raw amino-acid sequence, 659 residues long: Cyclic-di-AMP phosphodiesterase GdpP (659 aa).

Topologically, residues 1–8 (MPSFYEKP) are cytoplasmic. A run of 2 helical transmembrane segments spans residues 9-29 (LFRY…LISF) and 30-50 (YFNW…LFFI). At 51 to 659 (KRADSLIRQE…DEYFEGGVQR (609 aa)) the chain is on the cytoplasmic side. The tract at residues 84-149 (PIGIMLFNDQ…NDRKFRVVIK (66 aa)) is PAS-like domain, required for heme-binding. Positions 173-301 (ERTVLAYIFL…GGDQVAIKLP (129 aa)) constitute a GGDEF domain. Residues 339–496 (NVIIMGHKFP…IEATALLAGI (158 aa)) are DHH domain. His345, Asp349, Asp351, Asp420, His444, and Asp499 together coordinate Mn(2+). The segment at 591–646 (FAVARRDEQTVCISARSLGEVNVQIIMEALEGGGHLTNAATQLSGISVSEALERLK) is DHHA1 domain.

It belongs to the GdpP/PdeA phosphodiesterase family. Requires heme b as cofactor. The cofactor is Mg(2+). Mn(2+) serves as cofactor.

The protein localises to the cell membrane. It carries out the reaction 3',3'-c-di-AMP + H2O = 5'-O-phosphonoadenylyl-(3'-&gt;5')-adenosine + H(+). Phosphodiesterase (PDE) inhibited by Zn(2+), Ca(2+) inhibits in the presence of Mg(2+) but not Mn(2+); c-di-AMP PDE activity is competitively inhibited by ppGpp. Heme binding (by Fe(2+) or Fe(3+) heme) inhibits PDE, activity is partially restored by KCN or NO only for Fe(2+) heme. Binding of NO to Fe(2+) heme switches from hexa- to pentacoordination. Heme binding inhibits the ATPase activity. Its function is as follows. Has phosphodiesterase (PDE) activity against cyclic-di-AMP (c-di-AMP) and to a much lesser extent against cyclic-di-GMP (c-di-GMP) in the DHH/DHHA1 domains. Also has ATPase activity, probably via the GGDEF domain. Overexpression leads to increased sensitivity to methyl methanesulfonate (MMS) and H(2)O(2). Overexpression leads to extreme sensitivity to the beta-lactam antibiotic cefuroxime (CEF), probably dependent on PDE activity. May monitor cellular heme or NO levels. In B.subtilis c-di-AMP is a second messenger that mediates growth, DNA repair and cell wall homeostasis; it is toxic when present in excess. This chain is Cyclic-di-AMP phosphodiesterase GdpP, found in Bacillus subtilis (strain 168).